The sequence spans 249 residues: DNA repair protein RecO (249 aa).

The protein belongs to the RecO family.

Its function is as follows. Involved in DNA repair and RecF pathway recombination. This is DNA repair protein RecO from Lactobacillus delbrueckii subsp. bulgaricus (strain ATCC BAA-365 / Lb-18).